The primary structure comprises 253 residues: Ribonuclease PH (253 aa).

Phosphate is bound by residues Arg-86 and 124-126 (GTR).

It belongs to the RNase PH family. As to quaternary structure, homohexameric ring arranged as a trimer of dimers.

It catalyses the reaction tRNA(n+1) + phosphate = tRNA(n) + a ribonucleoside 5'-diphosphate. Phosphorolytic 3'-5' exoribonuclease that plays an important role in tRNA 3'-end maturation. Removes nucleotide residues following the 3'-CCA terminus of tRNAs; can also add nucleotides to the ends of RNA molecules by using nucleoside diphosphates as substrates, but this may not be physiologically important. Probably plays a role in initiation of 16S rRNA degradation (leading to ribosome degradation) during starvation. The chain is Ribonuclease PH from Brevibacillus brevis (strain 47 / JCM 6285 / NBRC 100599).